The chain runs to 445 residues: rRNA methyltransferase 3B, mitochondrial (445 aa).

A mitochondrion-targeting transit peptide spans 1–37 (MATRIASMRFRCALFQSALTLGRNEVNIKRYVRRRRA). Disordered stretches follow at residues 52-90 (EGVISQTSERSSQHNNDITRNTDKSSIENPVSPNNSQPV) and 311-334 (HSTTMGKHNDNTTPQKHRRPSDYG). Polar residues-rich tracts occupy residues 54–70 (VISQTSERSSQHNNDIT), 78–90 (IENPVSPNNSQPV), and 311–324 (HSTTMGKHNDNTTP). The S-adenosyl-L-methionine site is built by Gly-387, Ile-411, and Leu-420.

It belongs to the class IV-like SAM-binding methyltransferase superfamily. RNA methyltransferase TrmH family.

The protein resides in the mitochondrion. It carries out the reaction a uridine in rRNA + S-adenosyl-L-methionine = a 2'-O-methyluridine in rRNA + S-adenosyl-L-homocysteine + H(+). Functionally, S-adenosyl-L-methionine-dependent 2'-O-ribose methyltransferase that catalyzes the formation of 2'-O-methylguanosine at position 1485 (Gm1485) in the mitochondrial large subunit ribosomal RNA (mtLSU rRNA), a conserved modification in the peptidyl transferase domain of the mtLSU rRNA. Also required for formation of 2'-O-methyluridine at position 1484 (Um1484) mediated by MRM2. In Danio rerio (Zebrafish), this protein is rRNA methyltransferase 3B, mitochondrial.